A 360-amino-acid chain; its full sequence is Peptide chain release factor 1 (360 aa).

Gln235 is modified (N5-methylglutamine). Positions 286-311 are disordered; that stretch reads QAQAQADTRRNLLGSGDRSDKIRTYN.

Belongs to the prokaryotic/mitochondrial release factor family. In terms of processing, methylated by PrmC. Methylation increases the termination efficiency of RF1.

The protein localises to the cytoplasm. In terms of biological role, peptide chain release factor 1 directs the termination of translation in response to the peptide chain termination codons UAG and UAA. This Histophilus somni (strain 2336) (Haemophilus somnus) protein is Peptide chain release factor 1.